A 303-amino-acid polypeptide reads, in one-letter code: Elongation factor Ts (303 aa).

The tract at residues 82–85 (TDFV) is involved in Mg(2+) ion dislocation from EF-Tu.

It belongs to the EF-Ts family.

It is found in the cytoplasm. In terms of biological role, associates with the EF-Tu.GDP complex and induces the exchange of GDP to GTP. It remains bound to the aminoacyl-tRNA.EF-Tu.GTP complex up to the GTP hydrolysis stage on the ribosome. The sequence is that of Elongation factor Ts from Clostridioides difficile (strain 630) (Peptoclostridium difficile).